The sequence spans 286 residues: Diaminopimelate epimerase (286 aa).

Positions 13 and 66 each coordinate substrate. The active-site Proton donor is C75. Residues 76 to 77 (GN), N165, N198, and 216 to 217 (ER) each bind substrate. C225 acts as the Proton acceptor in catalysis. A substrate-binding site is contributed by 226-227 (GT).

Belongs to the diaminopimelate epimerase family. In terms of assembly, homodimer.

The protein resides in the cytoplasm. It catalyses the reaction (2S,6S)-2,6-diaminopimelate = meso-2,6-diaminopimelate. It participates in amino-acid biosynthesis; L-lysine biosynthesis via DAP pathway; DL-2,6-diaminopimelate from LL-2,6-diaminopimelate: step 1/1. Functionally, catalyzes the stereoinversion of LL-2,6-diaminopimelate (L,L-DAP) to meso-diaminopimelate (meso-DAP), a precursor of L-lysine and an essential component of the bacterial peptidoglycan. The polypeptide is Diaminopimelate epimerase (Oceanobacillus iheyensis (strain DSM 14371 / CIP 107618 / JCM 11309 / KCTC 3954 / HTE831)).